Here is a 161-residue protein sequence, read N- to C-terminus: Lipoprotein signal peptidase (161 aa).

The next 2 helical transmembrane spans lie at 64–84 (YRVPFFIITTSVAVVFLAWFY) and 92–114 (VLGRCAVSLVLGGAIGNLIDRVR). Active-site residues include Asp120 and Asp138. The chain crosses the membrane as a helical span at residues 131–151 (WPAFNVADSAICVGVGMLLLA).

Belongs to the peptidase A8 family.

It is found in the cell inner membrane. It carries out the reaction Release of signal peptides from bacterial membrane prolipoproteins. Hydrolyzes -Xaa-Yaa-Zaa-|-(S,diacylglyceryl)Cys-, in which Xaa is hydrophobic (preferably Leu), and Yaa (Ala or Ser) and Zaa (Gly or Ala) have small, neutral side chains.. It participates in protein modification; lipoprotein biosynthesis (signal peptide cleavage). This protein specifically catalyzes the removal of signal peptides from prolipoproteins. The polypeptide is Lipoprotein signal peptidase (Syntrophotalea carbinolica (strain DSM 2380 / NBRC 103641 / GraBd1) (Pelobacter carbinolicus)).